A 510-amino-acid chain; its full sequence is Inositol-3-phosphate synthase isozyme 2 (510 aa).

The protein belongs to the myo-inositol 1-phosphate synthase family. NAD(+) is required as a cofactor. Expressed in siliques, leaves, roots, seed endosperm, but not in embryos. Highest expression in seeds. In leaves, only expressed in hydathodes and vascular tissue.

Its subcellular location is the cytoplasm. It carries out the reaction D-glucose 6-phosphate = 1D-myo-inositol 3-phosphate. The protein operates within polyol metabolism; myo-inositol biosynthesis; myo-inositol from D-glucose 6-phosphate: step 1/2. Key enzyme in myo-inositol biosynthesis pathway that catalyzes the conversion of glucose 6-phosphate to 1-myo-inositol 1-phosphate in a NAD-dependent manner. This is Inositol-3-phosphate synthase isozyme 2 (IPS2) from Arabidopsis thaliana (Mouse-ear cress).